A 205-amino-acid polypeptide reads, in one-letter code: dITP/XTP pyrophosphatase (205 aa).

Substrate is bound at residue 11 to 16 (TKNMGK). Positions 44 and 73 each coordinate Mg(2+). Catalysis depends on D73, which acts as the Proton acceptor. Substrate-binding positions include S74, 158–161 (FGYD), K181, and 186–187 (HR).

It belongs to the HAM1 NTPase family. In terms of assembly, homodimer. Mg(2+) is required as a cofactor.

The enzyme catalyses XTP + H2O = XMP + diphosphate + H(+). It carries out the reaction dITP + H2O = dIMP + diphosphate + H(+). It catalyses the reaction ITP + H2O = IMP + diphosphate + H(+). In terms of biological role, pyrophosphatase that catalyzes the hydrolysis of nucleoside triphosphates to their monophosphate derivatives, with a high preference for the non-canonical purine nucleotides XTP (xanthosine triphosphate), dITP (deoxyinosine triphosphate) and ITP. Seems to function as a house-cleaning enzyme that removes non-canonical purine nucleotides from the nucleotide pool, thus preventing their incorporation into DNA/RNA and avoiding chromosomal lesions. The polypeptide is dITP/XTP pyrophosphatase (Bacillus thuringiensis subsp. konkukian (strain 97-27)).